We begin with the raw amino-acid sequence, 393 residues long: Bifunctional enzyme IspD/IspF (393 aa).

The tract at residues 1–234 is 2-C-methyl-D-erythritol 4-phosphate cytidylyltransferase; that stretch reads MTISQRTAAI…ARLAAQLGDI (234 aa). The segment at 235-393 is 2-C-methyl-D-erythritol 2,4-cyclodiphosphate synthase; that stretch reads RTGTGYDVHA…SATIRLPWSA (159 aa). The a divalent metal cation site is built by aspartate 241 and histidine 243. 4-CDP-2-C-methyl-D-erythritol 2-phosphate is bound by residues 241–243 and 267–268; these read DVH and HS. Histidine 275 contacts a divalent metal cation. Residues 289-291, 365-368, phenylalanine 372, and arginine 375 contribute to the 4-CDP-2-C-methyl-D-erythritol 2-phosphate site; these read DIG and TTSE.

In the N-terminal section; belongs to the IspD/TarI cytidylyltransferase family. IspD subfamily. The protein in the C-terminal section; belongs to the IspF family. A divalent metal cation serves as cofactor.

The enzyme catalyses 2-C-methyl-D-erythritol 4-phosphate + CTP + H(+) = 4-CDP-2-C-methyl-D-erythritol + diphosphate. It carries out the reaction 4-CDP-2-C-methyl-D-erythritol 2-phosphate = 2-C-methyl-D-erythritol 2,4-cyclic diphosphate + CMP. Its pathway is isoprenoid biosynthesis; isopentenyl diphosphate biosynthesis via DXP pathway; isopentenyl diphosphate from 1-deoxy-D-xylulose 5-phosphate: step 2/6. It functions in the pathway isoprenoid biosynthesis; isopentenyl diphosphate biosynthesis via DXP pathway; isopentenyl diphosphate from 1-deoxy-D-xylulose 5-phosphate: step 4/6. In terms of biological role, bifunctional enzyme that catalyzes the formation of 4-diphosphocytidyl-2-C-methyl-D-erythritol from CTP and 2-C-methyl-D-erythritol 4-phosphate (MEP) (IspD), and catalyzes the conversion of 4-diphosphocytidyl-2-C-methyl-D-erythritol 2-phosphate (CDP-ME2P) to 2-C-methyl-D-erythritol 2,4-cyclodiphosphate (ME-CPP) with a corresponding release of cytidine 5-monophosphate (CMP) (IspF). The chain is Bifunctional enzyme IspD/IspF from Bradyrhizobium sp. (strain BTAi1 / ATCC BAA-1182).